We begin with the raw amino-acid sequence, 212 residues long: ATP-dependent dethiobiotin synthetase BioD (212 aa).

Residue 13 to 18 (GIGKTV) coordinates ATP. Thr17 provides a ligand contact to Mg(2+). The active site involves Lys33. Glu100 serves as a coordination point for Mg(2+). ATP contacts are provided by residues 100-103 (EGAG) and 184-186 (PHV).

This sequence belongs to the dethiobiotin synthetase family. In terms of assembly, homodimer. The cofactor is Mg(2+).

Its subcellular location is the cytoplasm. It catalyses the reaction (7R,8S)-7,8-diammoniononanoate + CO2 + ATP = (4R,5S)-dethiobiotin + ADP + phosphate + 3 H(+). It functions in the pathway cofactor biosynthesis; biotin biosynthesis; biotin from 7,8-diaminononanoate: step 1/2. Catalyzes a mechanistically unusual reaction, the ATP-dependent insertion of CO2 between the N7 and N8 nitrogen atoms of 7,8-diaminopelargonic acid (DAPA, also called 7,8-diammoniononanoate) to form a ureido ring. This is ATP-dependent dethiobiotin synthetase BioD from Nitrobacter hamburgensis (strain DSM 10229 / NCIMB 13809 / X14).